Here is a 178-residue protein sequence, read N- to C-terminus: Phosphopantetheine adenylyltransferase (178 aa).

T17 contributes to the substrate binding site. ATP is bound by residues T17–F18 and H25. Substrate is bound by residues K49, L86, and R100. ATP-binding positions include G101–R103, E111, and L136–R142.

This sequence belongs to the bacterial CoaD family. Homohexamer. Requires Mg(2+) as cofactor.

It is found in the cytoplasm. The enzyme catalyses (R)-4'-phosphopantetheine + ATP + H(+) = 3'-dephospho-CoA + diphosphate. The protein operates within cofactor biosynthesis; coenzyme A biosynthesis; CoA from (R)-pantothenate: step 4/5. Its function is as follows. Reversibly transfers an adenylyl group from ATP to 4'-phosphopantetheine, yielding dephospho-CoA (dPCoA) and pyrophosphate. The protein is Phosphopantetheine adenylyltransferase of Zymomonas mobilis subsp. mobilis (strain ATCC 31821 / ZM4 / CP4).